Here is a 425-residue protein sequence, read N- to C-terminus: tRNA(Ile)-lysidine synthase (425 aa).

ATP is bound at residue 27–32 (SGGLDS).

The protein belongs to the tRNA(Ile)-lysidine synthase family.

It is found in the cytoplasm. It carries out the reaction cytidine(34) in tRNA(Ile2) + L-lysine + ATP = lysidine(34) in tRNA(Ile2) + AMP + diphosphate + H(+). Its function is as follows. Ligates lysine onto the cytidine present at position 34 of the AUA codon-specific tRNA(Ile) that contains the anticodon CAU, in an ATP-dependent manner. Cytidine is converted to lysidine, thus changing the amino acid specificity of the tRNA from methionine to isoleucine. This is tRNA(Ile)-lysidine synthase from Streptococcus pneumoniae serotype 2 (strain D39 / NCTC 7466).